A 168-amino-acid polypeptide reads, in one-letter code: MANRNDSRNNRRNKDDIEDQLVAVNRITKVVKGGRRMRFAALVVVGDKKGRVGFGTGKAQEVPEAIRKAVEDGKKKMINVPKVGTTIPHEVIGHYGSGNILLKPAEAGSGVAAGGAVRIVMDMAGISDVTSKSLGSNTPINVVRATIDGLKKLRTSEEVSKLRQPERA.

Positions 17-80 (IEDQLVAVNR…EDGKKKMINV (64 aa)) constitute an S5 DRBM domain.

This sequence belongs to the universal ribosomal protein uS5 family. As to quaternary structure, part of the 30S ribosomal subunit. Contacts proteins S4 and S8.

Functionally, with S4 and S12 plays an important role in translational accuracy. Its function is as follows. Located at the back of the 30S subunit body where it stabilizes the conformation of the head with respect to the body. The protein is Small ribosomal subunit protein uS5 of Lactobacillus acidophilus (strain ATCC 700396 / NCK56 / N2 / NCFM).